A 115-amino-acid chain; its full sequence is uncharacterized protein (115 aa).

Helical transmembrane passes span 15 to 35 (FSTQ…EVLF) and 52 to 72 (FDGV…YYSI).

The protein resides in the membrane. This is an uncharacterized protein from Saccharomyces cerevisiae (strain ATCC 204508 / S288c) (Baker's yeast).